Consider the following 421-residue polypeptide: Phosphatidylinositol 5-phosphate 4-kinase type-2 gamma (421 aa).

N-acetylalanine is present on Ala2. Ser26 is modified (phosphoserine). In terms of domain architecture, PIPK spans 43 to 420 (AADPLVGVFL…RFLDFIANIF (378 aa)). Positions 69–75 (VMLLPDD) are required for interaction with PIP5K1A. Ser349 carries the post-translational modification Phosphoserine.

As to quaternary structure, interacts with PIP5K1A; the interaction inhibits PIP5K1A kinase activity. Post-translationally, phosphorylated, phosphorylation is induced by EGF.

It is found in the endoplasmic reticulum. The protein resides in the cytoplasm. The enzyme catalyses a 1,2-diacyl-sn-glycero-3-phospho-(1D-myo-inositol-5-phosphate) + ATP = a 1,2-diacyl-sn-glycero-3-phospho-(1D-myo-inositol-4,5-bisphosphate) + ADP + H(+). The catalysed reaction is 1,2-dihexadecanoyl-sn-glycero-3-phospho-(1D-myo-inositol-5-phosphate) + ATP = 1,2-dihexadecanoyl-sn-glycero-3-phospho-(1D-myo-inositol-4,5-bisphosphate) + ADP + H(+). It carries out the reaction 1,2-dihexadecanoyl-sn-glycero-3-phospho-(1D-myo-inositol-5-phosphate) + GTP = 1,2-dihexadecanoyl-sn-glycero-3-phospho-(1D-myo-inositol-4,5-bisphosphate) + GDP + H(+). In terms of biological role, phosphatidylinositol 5-phosphate 4-kinase with low enzymatic activity. May be a GTP sensor, has higher GTP-dependent kinase activity than ATP-dependent kinase activity. PIP4Ks negatively regulate insulin signaling through a catalytic-independent mechanism. They interact with PIP5Ks and suppress PIP5K-mediated PtdIns(4,5)P2 synthesis and insulin-dependent conversion to PtdIns(3,4,5)P3. In Mus musculus (Mouse), this protein is Phosphatidylinositol 5-phosphate 4-kinase type-2 gamma.